A 173-amino-acid polypeptide reads, in one-letter code: RNA 2',3'-cyclic phosphodiesterase (173 aa).

The Proton donor role is filled by His-38. 2 short sequence motifs (HXTX) span residues 38–41 (HITV) and 118–121 (HLTI). His-118 acts as the Proton acceptor in catalysis.

Belongs to the 2H phosphoesterase superfamily. ThpR family.

The catalysed reaction is a 3'-end 2',3'-cyclophospho-ribonucleotide-RNA + H2O = a 3'-end 2'-phospho-ribonucleotide-RNA + H(+). In terms of biological role, hydrolyzes RNA 2',3'-cyclic phosphodiester to an RNA 2'-phosphomonoester. This Methanocaldococcus jannaschii (strain ATCC 43067 / DSM 2661 / JAL-1 / JCM 10045 / NBRC 100440) (Methanococcus jannaschii) protein is RNA 2',3'-cyclic phosphodiesterase.